Here is a 503-residue protein sequence, read N- to C-terminus: Surface lipoprotein assembly modifier (503 aa).

Residues 1 to 34 (MTITPVYTTFTPTKTPIKFFMAGLTFLIAHISHA) form the signal peptide. An N-terminal domain region spans residues 38–220 (RTDNQEPINQ…QYRQALKQRD (183 aa)). Residues 136–169 (ILLGYANALAALDKGNAKKAIDELRRIIAIMPEY) form a TPR repeat. Positions 221–503 (SWTWQVGMNL…QMFVEFSRIF (283 aa)) are C-terminal probable beta barrel. Transmembrane regions (beta stranded) follow at residues 222-232 (WTWQVGMNLAK), 259-270 (LSYQLGADKKWS), 275-285 (AYVGANAQIYG), 299-308 (GRLGANLGFA), 313-322 (DLSIETYGEK), 334-343 (IGIRMSVDYR), 348-358 (FQSLNAIDISR), 372-382 (TLYSTSLIYYP), 387-396 (YYLLGADFYD), 410-419 (RGIRTAWGQE), 424-434 (LSSRAQISINK), 454-463 (MQASLSLWHR), 470-479 (ITPRLTISTN), and 493-503 (NQMFVEFSRIF).

The protein belongs to the Slam family.

It localises to the cell outer membrane. Required for correct export to the cell surface of some cell outer membrane lipoproteins (tested with TpbP) upon heterologous expression in E.coli and probably also in Moraxella. This Moraxella catarrhalis (Branhamella catarrhalis) protein is Surface lipoprotein assembly modifier.